Here is a 193-residue protein sequence, read N- to C-terminus: DNA damage-inducible transcript 4-like protein (193 aa).

This sequence belongs to the DDIT4 family. As to expression, expressed in heart, skeletal muscle and testis.

The protein localises to the cytoplasm. Functionally, inhibits cell growth by regulating the TOR signaling pathway upstream of the TSC1-TSC2 complex and downstream of AKT1. The polypeptide is DNA damage-inducible transcript 4-like protein (Ddit4l) (Rattus norvegicus (Rat)).